The chain runs to 565 residues: Ubiquitin carboxyl-terminal hydrolase 39 (565 aa).

Basic and acidic residues-rich tracts occupy residues 1–21 (MSGR…ESES) and 28–39 (VKRERDREREPE). Disordered regions lie at residues 1-61 (MSGR…SARE) and 75-95 (EREV…NGRV). Serine 46 is subject to Phosphoserine. Residue lysine 51 forms a Glycyl lysine isopeptide (Lys-Gly) (interchain with G-Cter in SUMO2) linkage. Serine 82 carries the phosphoserine modification. Positions 85-95 (EREVRAKNGRV) are enriched in basic and acidic residues. Residues 103–200 (RHCPYLDTIN…YVLKPTFTKQ (98 aa)) form a UBP-type; degenerate zinc finger. Cysteine 136, cysteine 139, histidine 155, and histidine 161 together coordinate Zn(2+). In terms of domain architecture, USP spans 225-555 (VGLNNIKAND…EAYIQIWKRR (331 aa)).

This sequence belongs to the peptidase C19 family. In terms of assembly, the U4/U6-U5 tri-snRNP complex is a building block of the precatalytic spliceosome (spliceosome B complex). Component of the U4/U6-U5 tri-snRNP complex composed of the U4, U6 and U5 snRNAs and at least PRPF3, PRPF4, PRPF6, PRPF8, PRPF31, SNRNP200, TXNL4A, SNRNP40, SNRPB, SNRPD1, SNRPD2, SNRPD3, SNRPE, SNRPF, SNRPG, DDX23, CD2BP2, PPIH, SNU13, EFTUD2, SART1 and USP39, plus LSM2, LSM3, LSM4, LSM5, LSM6, LSM7 and LSM8.

It is found in the nucleus. It carries out the reaction Thiol-dependent hydrolysis of ester, thioester, amide, peptide and isopeptide bonds formed by the C-terminal Gly of ubiquitin (a 76-residue protein attached to proteins as an intracellular targeting signal).. Its function is as follows. Deubiquitinating enzyme that plays a role in many cellular processes including cellular antiviral response, epithelial morphogenesis, DNA repair or B-cell development. Plays a role in pre-mRNA splicing as a component of the U4/U6-U5 tri-snRNP, one of the building blocks of the precatalytic spliceosome. Specifically regulates immunoglobulin gene rearrangement in a spliceosome-dependent manner, which involves modulating chromatin interactions at the Igh locus and therefore plays an essential role in B-cell development. Regulates AURKB mRNA levels, and thereby plays a role in cytokinesis and in the spindle checkpoint. Regulates apoptosis and G2/M cell cycle checkpoint in response to DNA damage by deubiquitinating and stabilizing CHK2. Also plays an important role in DNA repair by controlling the recruitment of XRCC4/LIG4 to DNA double-strand breaks for non-homologous end-joining repair. Participates in antiviral activity by affecting the type I IFN signaling by stabilizing STAT1 and decreasing its 'Lys-6'-linked ubiquitination. Contributes to non-canonical Wnt signaling during epidermal differentiation. Acts as a negative regulator NF-kappa-B activation through deubiquitination of 'Lys-48'-linked ubiquitination of NFKBIA. This Homo sapiens (Human) protein is Ubiquitin carboxyl-terminal hydrolase 39.